The sequence spans 498 residues: ATP synthase subunit beta, chloroplastic (498 aa).

Residue 172-179 participates in ATP binding; that stretch reads GGAGVGKT.

This sequence belongs to the ATPase alpha/beta chains family. As to quaternary structure, F-type ATPases have 2 components, CF(1) - the catalytic core - and CF(0) - the membrane proton channel. CF(1) has five subunits: alpha(3), beta(3), gamma(1), delta(1), epsilon(1). CF(0) has four main subunits: a(1), b(1), b'(1) and c(9-12).

It is found in the plastid. Its subcellular location is the chloroplast thylakoid membrane. It carries out the reaction ATP + H2O + 4 H(+)(in) = ADP + phosphate + 5 H(+)(out). Produces ATP from ADP in the presence of a proton gradient across the membrane. The catalytic sites are hosted primarily by the beta subunits. The sequence is that of ATP synthase subunit beta, chloroplastic from Schisandra sphenanthera (Southern magnolia vine).